Here is a 525-residue protein sequence, read N- to C-terminus: Mitochondrial-processing peptidase subunit alpha (525 aa).

Residues 1-33 (MAAVVLAATRLLRGSGSWGCSRLRFGPPAYRRF) constitute a mitochondrion transit peptide. Lysine 64 carries the N6-succinyllysine modification. Lysine 299 bears the N6-acetyllysine mark.

This sequence belongs to the peptidase M16 family. In terms of assembly, heterodimer of PMPCA (alpha) and PMPCB (beta) subunits, forming the mitochondrial processing protease (MPP) in which PMPCA is involved in substrate recognition and binding and PMPCB is the catalytic subunit. Ubiquitously expressed with highest expression in fetal tissues and adult brain, cerebellum and cerebellar vermis.

The protein localises to the mitochondrion matrix. The protein resides in the mitochondrion inner membrane. Substrate recognition and binding subunit of the essential mitochondrial processing protease (MPP), which cleaves the mitochondrial sequence off newly imported precursors proteins. The chain is Mitochondrial-processing peptidase subunit alpha (PMPCA) from Homo sapiens (Human).